A 1412-amino-acid chain; its full sequence is DNA-directed RNA polymerase subunit beta' (1412 aa).

Zn(2+) contacts are provided by C70, C72, C85, and C88. Mg(2+)-binding residues include D460, D462, and D464. 4 residues coordinate Zn(2+): C819, C893, C900, and C903. Residues 1391-1412 (AEESFEFGTPETPAAEQQHSGE) form a disordered region.

The protein belongs to the RNA polymerase beta' chain family. In terms of assembly, the RNAP catalytic core consists of 2 alpha, 1 beta, 1 beta' and 1 omega subunit. When a sigma factor is associated with the core the holoenzyme is formed, which can initiate transcription. Mg(2+) serves as cofactor. The cofactor is Zn(2+).

It carries out the reaction RNA(n) + a ribonucleoside 5'-triphosphate = RNA(n+1) + diphosphate. In terms of biological role, DNA-dependent RNA polymerase catalyzes the transcription of DNA into RNA using the four ribonucleoside triphosphates as substrates. The chain is DNA-directed RNA polymerase subunit beta' from Paraburkholderia xenovorans (strain LB400).